We begin with the raw amino-acid sequence, 249 residues long: 2,3-bisphosphoglycerate-dependent phosphoglycerate mutase (249 aa).

Residues 9 to 16, 22 to 23, R61, 88 to 91, K99, 115 to 116, and 184 to 185 each bind substrate; these read RHGQSQWN, TG, ERHY, RR, and GN. The Tele-phosphohistidine intermediate role is filled by H10. E88 acts as the Proton donor/acceptor in catalysis.

It belongs to the phosphoglycerate mutase family. BPG-dependent PGAM subfamily. In terms of assembly, homodimer.

It catalyses the reaction (2R)-2-phosphoglycerate = (2R)-3-phosphoglycerate. It functions in the pathway carbohydrate degradation; glycolysis; pyruvate from D-glyceraldehyde 3-phosphate: step 3/5. In terms of biological role, catalyzes the interconversion of 2-phosphoglycerate and 3-phosphoglycerate. The protein is 2,3-bisphosphoglycerate-dependent phosphoglycerate mutase of Xanthomonas axonopodis pv. citri (strain 306).